A 438-amino-acid polypeptide reads, in one-letter code: V-type ATP synthase beta chain (438 aa).

The protein belongs to the ATPase alpha/beta chains family.

Produces ATP from ADP in the presence of a proton gradient across the membrane. The V-type beta chain is a regulatory subunit. This chain is V-type ATP synthase beta chain (atpB), found in Chlamydia trachomatis serovar D (strain ATCC VR-885 / DSM 19411 / UW-3/Cx).